Here is a 242-residue protein sequence, read N- to C-terminus: Glucosamine-6-phosphate deaminase (242 aa).

The Proton acceptor; for enolization step role is filled by aspartate 71. The For ring-opening step role is filled by asparagine 142. Histidine 144 acts as the Proton acceptor; for ring-opening step in catalysis. The active-site For ring-opening step is glutamate 149.

It belongs to the glucosamine/galactosamine-6-phosphate isomerase family. NagB subfamily.

The enzyme catalyses alpha-D-glucosamine 6-phosphate + H2O = beta-D-fructose 6-phosphate + NH4(+). It functions in the pathway amino-sugar metabolism; N-acetylneuraminate degradation; D-fructose 6-phosphate from N-acetylneuraminate: step 5/5. Functionally, catalyzes the reversible isomerization-deamination of glucosamine 6-phosphate (GlcN6P) to form fructose 6-phosphate (Fru6P) and ammonium ion. This chain is Glucosamine-6-phosphate deaminase, found in Malacoplasma penetrans (strain HF-2) (Mycoplasma penetrans).